Reading from the N-terminus, the 492-residue chain is MSDLQANKDAAAVNRQSSSSSADLNGPSPMRKMISVASIAAGIQFGWALQLSLLTPYVQLLGVPHKWSSFIWLCGPVSGLLVQPSVGYFSDRCKSRFGRRRPFIAMGALLVAVAVVLIGYAADFGHSMGDKVDEPVKMRAVVIFALGFWILDVANNTLQGPCRAFLGDLAAGDAKKTRTANAFFSFFMAVGNVLGYAAGSYTNLYKIFPFTMTKACDIYCANLKSCFFLSITLLLVVTIIALWYVEDKQWSPKADSDNEKTPFFGEIFGAFKVMKRPMWMLLIVTALNWIAWFPFLLYDTDWMGREVYGGDSKGDDKMKKLYNQGIHVGGLGLMLNSIVLGFMSLGIEGISRKMGGAKRLWGAVNIILAVCLAMTVLVTKKAEEHRRIAGPMALPTDGIRAGALTLFALLGIPLAITFSIPFALASIISSSSGAGQGLSLGVLNMTIVIPQMVVSFGVGPIDALFGGGNLPGFVVGAIAAAISSVVAFSVLP.

The segment at 1–26 (MSDLQANKDAAAVNRQSSSSSADLNG) is disordered. At 1 to 33 (MSDLQANKDAAAVNRQSSSSSADLNGPSPMRKM) the chain is on the cytoplasmic side. A compositionally biased stretch (polar residues) spans 14–23 (NRQSSSSSAD). S17 is modified (phosphoserine). The chain crosses the membrane as a helical span at residues 34–54 (ISVASIAAGIQFGWALQLSLL). Residues 55-68 (TPYVQLLGVPHKWS) lie on the Extracellular side of the membrane. A helical membrane pass occupies residues 69-89 (SFIWLCGPVSGLLVQPSVGYF). The Cytoplasmic portion of the chain corresponds to 90-101 (SDRCKSRFGRRR). A helical membrane pass occupies residues 102-122 (PFIAMGALLVAVAVVLIGYAA). Over 123 to 139 (DFGHSMGDKVDEPVKMR) the chain is Extracellular. Residues 140 to 160 (AVVIFALGFWILDVANNTLQG) traverse the membrane as a helical segment. The Cytoplasmic segment spans residues 161-181 (PCRAFLGDLAAGDAKKTRTAN). A helical membrane pass occupies residues 182–202 (AFFSFFMAVGNVLGYAAGSYT). Topologically, residues 203–224 (NLYKIFPFTMTKACDIYCANLK) are extracellular. Residues 225 to 245 (SCFFLSITLLLVVTIIALWYV) traverse the membrane as a helical segment. Residues 246–277 (EDKQWSPKADSDNEKTPFFGEIFGAFKVMKRP) lie on the Cytoplasmic side of the membrane. The helical transmembrane segment at 278 to 298 (MWMLLIVTALNWIAWFPFLLY) threads the bilayer. At 299 to 324 (DTDWMGREVYGGDSKGDDKMKKLYNQ) the chain is on the extracellular side. Residues 325–345 (GIHVGGLGLMLNSIVLGFMSL) traverse the membrane as a helical segment. Residues 346 to 359 (GIEGISRKMGGAKR) are Cytoplasmic-facing. A helical membrane pass occupies residues 360 to 380 (LWGAVNIILAVCLAMTVLVTK). Residues 381–403 (KAEEHRRIAGPMALPTDGIRAGA) lie on the Extracellular side of the membrane. A helical transmembrane segment spans residues 404-424 (LTLFALLGIPLAITFSIPFAL). At 425 to 446 (ASIISSSSGAGQGLSLGVLNMT) the chain is on the cytoplasmic side. A helical transmembrane segment spans residues 447 to 467 (IVIPQMVVSFGVGPIDALFGG). Topologically, residues 468-469 (GN) are extracellular. A helical membrane pass occupies residues 470–490 (LPGFVVGAIAAAISSVVAFSV). Residues 491–492 (LP) lie on the Cytoplasmic side of the membrane.

It belongs to the glycoside-pentoside-hexuronide (GPH) cation symporter transporter (TC 2.A.2.4) family.

The protein resides in the cell membrane. Its pathway is glycan biosynthesis; sucrose metabolism. In terms of biological role, may be responsible for the transport of glucosides into the cell, with the concomitant uptake of protons (symport system). Does not seem to transport sucrose. The polypeptide is Putative sucrose transport protein SUC6 (Arabidopsis thaliana (Mouse-ear cress)).